The following is an 838-amino-acid chain: Tape measure protein (838 aa).

The tract at residues 378–397 (ARANEENASREAAAESDRQK) is disordered. The span at 380–397 (ANEENASREAAAESDRQK) shows a compositional bias: basic and acidic residues. Positions 399 to 419 (AAQAQANYAKTQTALEKYTAR) form a coiled coil.

The protein belongs to the Lambdavirus tape measure protein family. As to quaternary structure, interacts with the tail initiator complex presumably through its C-terminus domain. Interacts with the tail assembly proteins.

The protein localises to the virion. Functionally, serves as a ruler that controls the length of tail by stopping the tail tube polymerization and is probably released from the tail shaft during infection to facilitate DNA translocation into the host cell. Assembles into a multimeric linear form probably arranged as a coil of alpha-helices and stabilized by the covering tail assembly proteins. Its C-terminus fixes the tail tip complex, thereby forming the tail assembly initiator complex. Tail tube proteins polymerize around the tape measure protein, displacing the tail assembly proteins. When the tail reaches the length specified by the tape measure protein, it stops and becomes capped by the tail terminator protein. In Escherichia coli (Bacteriophage N15), this protein is Tape measure protein.